The sequence spans 606 residues: Probable methyltransferase PMT5 (606 aa).

Over methionine 1–arginine 20 the chain is Cytoplasmic. Residues glycine 21–serine 41 form a helical; Signal-anchor for type II membrane protein membrane-spanning segment. At asparagine 42–lysine 606 the chain is on the lumenal side. N-linked (GlcNAc...) asparagine glycans are attached at residues asparagine 101 and asparagine 409.

Belongs to the methyltransferase superfamily.

The protein localises to the endoplasmic reticulum membrane. This is Probable methyltransferase PMT5 from Arabidopsis thaliana (Mouse-ear cress).